Reading from the N-terminus, the 85-residue chain is Probable Thioredoxin (85 aa).

The 84-residue stretch at 2-85 (VVKIEVFTSP…LFEAISDEIE (84 aa)) folds into the Glutaredoxin domain. C13 and C16 form a disulfide bridge.

Belongs to the glutaredoxin family.

It localises to the cytoplasm. Does not function as a glutathione-disulfide oxidoreductase in the presence of glutathione and glutathione reductase. May be a component of a ribonucleotide-reducing system distinct from the previously described systems utilizing thioredoxin or glutaredoxin. This chain is Probable Thioredoxin, found in Methanothermobacter marburgensis (strain ATCC BAA-927 / DSM 2133 / JCM 14651 / NBRC 100331 / OCM 82 / Marburg) (Methanobacterium thermoautotrophicum).